The primary structure comprises 344 residues: tRNA N6-adenosine threonylcarbamoyltransferase (344 aa).

2 residues coordinate Fe cation: His110 and His114. Substrate is bound by residues 133–137 (VMSGA), Asp166, Gly179, and Asn278. Residue Asp303 participates in Fe cation binding.

Belongs to the KAE1 / TsaD family. The cofactor is Fe(2+).

It localises to the cytoplasm. It carries out the reaction L-threonylcarbamoyladenylate + adenosine(37) in tRNA = N(6)-L-threonylcarbamoyladenosine(37) in tRNA + AMP + H(+). Required for the formation of a threonylcarbamoyl group on adenosine at position 37 (t(6)A37) in tRNAs that read codons beginning with adenine. Is involved in the transfer of the threonylcarbamoyl moiety of threonylcarbamoyl-AMP (TC-AMP) to the N6 group of A37, together with TsaE and TsaB. TsaD likely plays a direct catalytic role in this reaction. The sequence is that of tRNA N6-adenosine threonylcarbamoyltransferase from Chlamydia felis (strain Fe/C-56) (Chlamydophila felis).